Here is a 364-residue protein sequence, read N- to C-terminus: Putative protein C31H2.4 (364 aa).

VOC domains lie at 6-134 (AIHH…LGEF) and 161-320 (LMDH…IFSK). The Fe cation site is built by histidine 164, histidine 248, and glutamate 331.

It belongs to the 4HPPD family. Fe cation is required as a cofactor.

The chain is Putative protein C31H2.4 from Caenorhabditis elegans.